A 198-amino-acid chain; its full sequence is (S)-2-hydroxypropylphosphonic acid epoxidase (198 aa).

The 56-residue stretch at 15-70 (LKDRREQVKMDHAALASLLGETPETVAAWENGEGGELTLTQLGRIAHVLGTSIGAL) folds into the HTH cro/C1-type domain. K23 is a binding site for substrate. The segment at residues 26-45 (HAALASLLGETPETVAAWEN) is a DNA-binding region (H-T-H motif). Residues R97, Y105, 135–138 (NSGH), and E142 contribute to the substrate site. Residues 136-196 (SGHAGNEFLF…GTGSAKLIAV (61 aa)) form the Cupin type-2 domain. 3 residues coordinate Fe cation: H138, E142, and H180.

Belongs to the non-heme iron-dependent dioxygenase family. Homotetramer. Fe(2+) is required as a cofactor.

The enzyme catalyses (S)-2-hydroxypropylphosphonate + H2O2 = (1R,2S)-epoxypropylphosphonate + 2 H2O. It participates in antibiotic biosynthesis; fosfomycin biosynthesis. Functionally, non-heme-dependent dioxygenase that catalyzes the oxidative epoxidation of (S)-2-hydroxypropylphosphonate into (1R,2S)-epoxypropylphosphonate, the final step in the biosynthesis of fosfomycin antibiotic. The chain is (S)-2-hydroxypropylphosphonic acid epoxidase (hppE) from Streptomyces wedmorensis.